We begin with the raw amino-acid sequence, 8892 residues long: Nonribosomal peptide synthetase 32 (8892 aa).

Residues 12 to 85 (EPSKLVLGRV…QLAESIAQQN (74 aa)) enclose the Carrier 1 domain. S46 carries the post-translational modification O-(pantetheine 4'-phosphoryl)serine. The disordered stretch occupies residues 88 to 112 (AGNGVNGHANGNGMNGNGLHNEATI). Low complexity predominate over residues 93–108 (NGHANGNGMNGNGLHN). The condensation 1 stretch occupies residues 567–956 (PTSANVPRRV…EGVDLSVRDF (390 aa)). Residues 989-1386 (KMAEQPEALA…GRIDSQIKIR (398 aa)) are adenylation 1. A Carrier 2 domain is found at 1523-1599 (ISATAVEREL…ELAAEVQATQ (77 aa)). S1560 carries the post-translational modification O-(pantetheine 4'-phosphoryl)serine. Positions 1609–2039 (GAIALSPIQQ…YGQTVKSLVN (431 aa)) are epimerization 1. Residues 2083 to 2518 (EDILPCSPIQ…LLLPAEEAKL (436 aa)) form a condensation 2 region. An adenylation 2 region spans residues 2543–2934 (SQPEALAVSA…GRRDTQVKIR (392 aa)). The region spanning 3061 to 3137 (SSATPIEREL…ELAANSQTGR (77 aa)) is the Carrier 3 domain. S3098 carries the O-(pantetheine 4'-phosphoryl)serine modification. The tract at residues 3153–3590 (LSPIQQMFFD…GDTVKTLVEE (438 aa)) is epimerization 2. The segment at 3634–4061 (EDILPCSAIQ…NVDRPLRELT (428 aa)) is condensation 3. Positions 4098–4488 (TLPEALAISS…GRIDSQIKIR (391 aa)) are adenylation 3. The 77-residue stretch at 4627–4703 (APTTDLERKL…DLSRVVEEKC (77 aa)) folds into the Carrier 4 domain. S4664 carries the post-translational modification O-(pantetheine 4'-phosphoryl)serine. Residues 4760 to 5181 (EDVYPCSPMQ…LLTDEDCDQL (422 aa)) form a condensation 4 region. Positions 5205 to 5605 (TSYPTAPAIS…GRRDTQVKIR (401 aa)) are adenylation 4. The Carrier 5 domain maps to 5745–5821 (MPTTPMEQKL…DLAEAMEEKG (77 aa)). S5782 carries the post-translational modification O-(pantetheine 4'-phosphoryl)serine. The interval 5868–6285 (EDVYPCSPLQ…LLSPGQMAQI (418 aa)) is condensation 5. The adenylation 5 stretch occupies residues 6307–6700 (QMTTRPAATA…GRIDTQIKIR (394 aa)). Residues 6834–6911 (ELTTTIERQL…ELATQTQTTE (78 aa)) form the Carrier 6 domain. At S6872 the chain carries O-(pantetheine 4'-phosphoryl)serine. Positions 6923–7360 (NFQLSPIQQM…SYSCAIESLV (438 aa)) are epimerization 3. The tract at residues 7403-7834 (VQDILPCSPI…LLPAGDANQI (432 aa)) is condensation 6. Positions 7855–8253 (QQMAAHPTAQ…LDRIGTQVKI (399 aa)) are adenylation 6. One can recognise a Carrier 7 domain in the interval 8380 to 8456 (APVGRNEEIL…AMAARVTADI (77 aa)). O-(pantetheine 4'-phosphoryl)serine is present on S8417. The interval 8490–8878 (HFAFDATGPC…EIIEDSGCNV (389 aa)) is condensation 7.

This sequence belongs to the NRP synthetase family.

It participates in secondary metabolite biosynthesis. In terms of biological role, nonribosomal peptide synthetase; part of the gene cluster that mediates the biosynthesis of the lipopeptides W493 A and B. W493 A and B consist of six amino acid residues D-allo-thr, L-Ala, D-Ala, L-Gln, D-Tyr, and L-Val/L-Ile linked to a 3-hydroxy-4-methyltetradecanoic acid polyketide chain. The biosynthesis starts with formation of the linear polyketide chain by the highly reducing polyketide synthase PKS40. The gene cluster contains a putative acyl-CoA ligase (FPSE_09184) for formation of a CoA thioester polyketide. The thiol bond could be hydrolyzed by the putative thioesterase (FPSE_09186) and then accepted by the first T domain in module 1 of NRPS32. The second T domain is responsible for accepting a threonine, which is adenylated by the A domain and epimerized to the D-allo-threonine formed by the E domain. The five successive modules incorporate Ala, Ala, Gln, Tyr, and Val/Ile into the final product, which is released by cyclization. The protein is Nonribosomal peptide synthetase 32 of Fusarium pseudograminearum (strain CS3096) (Wheat and barley crown-rot fungus).